A 975-amino-acid chain; its full sequence is MAAEAAGGKYRSTVSKSKDPSGLLISVIRTLSTSDDVEDRENEKGRLEEAYEKCDRDLDELIVQHYTELTTAIRTYQSITERITNSRNKIKQVKENLLSCKMLLHCKRDELRKLWIEGIEHKHVLNLLDEIENIKQVPQKLEQCMASKHYLSATDMLVSAVESLEGPLLQVEGLSDLRLELHSKKMNLHLVLIEELHRHLYIKSTSRVVQRNKEKGKMSSHGKDPSPGPLIDVSNIPTPRKFLDASQYSAAGGSSVREMNLQDVKEDLECDPEENSTLFMGILIQGLARLKKIPETVKAIKERLEQELKQIVKRSTTQVADSAYQRGESLTVDNQPRLLLELLELLFDKFNAVATAHSVVLGYLQDSVGTQLTQQEEIKLYDMADVWVKIQDVLQMLLTEYLDMKNTRTASEPSAQLSYASTGREFAAFFAKKKPQRPKNSLFKFESSSHAISMSAYLREQRRELYSRSGELQGGPDDNLIEGGGTKFVCKPGARNITVIFHPLLRFIQEIEHALGLGPAKQCPLREFLTVYIKSIFLNQVLAEINKEIEGVTKTSDPLKILANADTMKVLGVQRPLLQSTIIVEKTVQDLMNLMHDLSAYSDQFLNMVCVKLQEYKDTCSTAYRGIVQSEEKLVISASWAKDDDISRLLKSLPNWTNMAQPKQLRPKREEEEDFIRAAFGKESEVLIGNLGDKLIPPQDILRDVSDLKALANMHESLEWLAGRTKSAFSNLSTSQMLSPAQESHVNMDLPPVSEQIMQTLSELAKTFQDMADRCLLVLHLEVRVHCFHYLIPLAKEGNYAIVANVESMDYDPLVVKLNKDISAMEEAMSASLQQHKFQYIFEGLGHLISCILINGAQYFRRISESGIKKMCRNIFVLQQNLTNITMSREADLDFARQYYEMLYNTADELLNLVVDQGVKYTELEYIHALTLLHRSQTGVGDQTTQNTRLQRLKEIICEQAAIKQATKDKKITTV.

At alanine 2 the chain carries N-acetylalanine. At lysine 9 the chain carries N6-acetyllysine. Phosphoserine is present on serine 32. The stretch at 32–114 (STSDDVEDRE…HCKRDELRKL (83 aa)) forms a coiled coil. A compositionally biased stretch (basic and acidic residues) spans 211 to 224 (RNKEKGKMSSHGKD). The tract at residues 211-230 (RNKEKGKMSSHGKDPSPGPL) is disordered. Position 226 is a phosphoserine (serine 226). Threonine 238 carries the phosphothreonine modification. Residue serine 469 is modified to Phosphoserine.

Belongs to the SEC8 family. As to quaternary structure, the exocyst complex is composed of EXOC1, EXOC2, EXOC3, EXOC4, EXOC5, EXOC6, EXOC7 and EXOC8. Interacts with BIRC6/bruce. Interacts with MYRIP. Interacts with SH3BP1; required for the localization of both SH3BP1 and the exocyst to the leading edge of migrating cells. Interacts with SLC6A9. As to expression, expressed in the striatum (at protein level).

Its subcellular location is the midbody. It localises to the midbody ring. It is found in the cell projection. The protein localises to the cytoplasm. The protein resides in the cytoskeleton. Its subcellular location is the microtubule organizing center. It localises to the centrosome. Component of the exocyst complex involved in the docking of exocytic vesicles with fusion sites on the plasma membrane. This Mus musculus (Mouse) protein is Exocyst complex component 4 (Exoc4).